We begin with the raw amino-acid sequence, 175 residues long: Protein MODIFYING WALL LIGNIN-1 (175 aa).

An N-terminal signal peptide occupies residues 1–24 (MFIFLFGLAAFFLCLSAEFQKAKA). At 25–52 (LLRAQVFLKGKDLKWDGESCYLPENRAF) the chain is on the cytoplasmic side. The chain crosses the membrane as a helical span at residues 53 to 73 (GLGIAALVCVSVAQIVGNVVI). Residues 74 to 86 (CRGFTKTDKTRTT) lie on the Extracellular side of the membrane. The chain crosses the membrane as a helical span at residues 87-107 (IFCIILLLFSWVNFAVAVTLI). The Cytoplasmic portion of the chain corresponds to 108 to 135 (SVGASMNREQIYGKGWLNRECYLVKDGV). Residues 136–156 (FAASGFLSVTTMAAILGAFAF) traverse the membrane as a helical segment. The Extracellular portion of the chain corresponds to 157 to 175 (KVKPSLQVENHDKRHTQNV).

Belongs to the DESIGUAL family. As to quaternary structure, interacts with CRK19.

It localises to the cell membrane. Its function is as follows. Together with MWL2, contributes to secondary cell wall biology, specifically lignin biosynthesis. The sequence is that of Protein MODIFYING WALL LIGNIN-1 from Arabidopsis thaliana (Mouse-ear cress).